Consider the following 139-residue polypeptide: D-ribose pyranase (139 aa).

Histidine 20 functions as the Proton donor in the catalytic mechanism. Residues aspartate 28, histidine 106, and 128–130 (YAN) each bind substrate.

The protein belongs to the RbsD / FucU family. RbsD subfamily. As to quaternary structure, homodecamer.

It localises to the cytoplasm. The catalysed reaction is beta-D-ribopyranose = beta-D-ribofuranose. It participates in carbohydrate metabolism; D-ribose degradation; D-ribose 5-phosphate from beta-D-ribopyranose: step 1/2. In terms of biological role, catalyzes the interconversion of beta-pyran and beta-furan forms of D-ribose. The polypeptide is D-ribose pyranase (Vibrio vulnificus (strain CMCP6)).